Reading from the N-terminus, the 449-residue chain is Bifunctional protein GlmU (449 aa).

Residues 1–226 form a pyrophosphorylase region; that stretch reads MVIVAVLAAG…YEEILGVNDR (226 aa). UDP-N-acetyl-alpha-D-glucosamine-binding positions include 7 to 10, lysine 21, glutamine 73, and 78 to 79; these read LAAG and GT. A Mg(2+)-binding site is contributed by aspartate 103. UDP-N-acetyl-alpha-D-glucosamine is bound by residues glycine 140, glutamate 155, asparagine 170, and asparagine 224. Position 224 (asparagine 224) interacts with Mg(2+). The interval 227–247 is linker; sequence VQLAAAYQVLQNRIKKAWMQA. The interval 248–449 is N-acetyltransferase; sequence GVTLIDPASI…VVKPNWEPEA (202 aa). Residues arginine 329 and lysine 347 each coordinate UDP-N-acetyl-alpha-D-glucosamine. The Proton acceptor role is filled by histidine 359. Residues tyrosine 362 and asparagine 373 each contribute to the UDP-N-acetyl-alpha-D-glucosamine site. Acetyl-CoA contacts are provided by residues alanine 376, 382-383, alanine 419, and arginine 436; that span reads NY.

The protein in the N-terminal section; belongs to the N-acetylglucosamine-1-phosphate uridyltransferase family. This sequence in the C-terminal section; belongs to the transferase hexapeptide repeat family. As to quaternary structure, homotrimer. It depends on Mg(2+) as a cofactor.

The protein localises to the cytoplasm. It catalyses the reaction alpha-D-glucosamine 1-phosphate + acetyl-CoA = N-acetyl-alpha-D-glucosamine 1-phosphate + CoA + H(+). The catalysed reaction is N-acetyl-alpha-D-glucosamine 1-phosphate + UTP + H(+) = UDP-N-acetyl-alpha-D-glucosamine + diphosphate. It participates in nucleotide-sugar biosynthesis; UDP-N-acetyl-alpha-D-glucosamine biosynthesis; N-acetyl-alpha-D-glucosamine 1-phosphate from alpha-D-glucosamine 6-phosphate (route II): step 2/2. Its pathway is nucleotide-sugar biosynthesis; UDP-N-acetyl-alpha-D-glucosamine biosynthesis; UDP-N-acetyl-alpha-D-glucosamine from N-acetyl-alpha-D-glucosamine 1-phosphate: step 1/1. It functions in the pathway bacterial outer membrane biogenesis; LPS lipid A biosynthesis. Its function is as follows. Catalyzes the last two sequential reactions in the de novo biosynthetic pathway for UDP-N-acetylglucosamine (UDP-GlcNAc). The C-terminal domain catalyzes the transfer of acetyl group from acetyl coenzyme A to glucosamine-1-phosphate (GlcN-1-P) to produce N-acetylglucosamine-1-phosphate (GlcNAc-1-P), which is converted into UDP-GlcNAc by the transfer of uridine 5-monophosphate (from uridine 5-triphosphate), a reaction catalyzed by the N-terminal domain. In Thermosynechococcus vestitus (strain NIES-2133 / IAM M-273 / BP-1), this protein is Bifunctional protein GlmU.